The chain runs to 1316 residues: DNA-directed RNA polymerase subunit beta' (1316 aa).

Zn(2+) is bound by residues cysteine 60, cysteine 62, cysteine 75, and cysteine 78. The tract at residues 183–209 is disordered; sequence ELEEEGAKSDVRRKVRDGGEREMRQLR. Mg(2+) contacts are provided by aspartate 535, aspartate 537, and aspartate 539. Zn(2+) contacts are provided by cysteine 890, cysteine 966, cysteine 973, and cysteine 976.

Belongs to the RNA polymerase beta' chain family. The RNAP catalytic core consists of 2 alpha, 1 beta, 1 beta' and 1 omega subunit. When a sigma factor is associated with the core the holoenzyme is formed, which can initiate transcription. The cofactor is Mg(2+). It depends on Zn(2+) as a cofactor.

The enzyme catalyses RNA(n) + a ribonucleoside 5'-triphosphate = RNA(n+1) + diphosphate. Its function is as follows. DNA-dependent RNA polymerase catalyzes the transcription of DNA into RNA using the four ribonucleoside triphosphates as substrates. The protein is DNA-directed RNA polymerase subunit beta' of Mycolicibacterium gilvum (strain PYR-GCK) (Mycobacterium gilvum (strain PYR-GCK)).